The chain runs to 124 residues: Small ribosomal subunit protein uS12cz/uS12cy (124 aa).

Belongs to the universal ribosomal protein uS12 family. As to quaternary structure, part of the 30S ribosomal subunit.

The protein resides in the plastid. Its subcellular location is the chloroplast. Functionally, with S4 and S5 plays an important role in translational accuracy. Located at the interface of the 30S and 50S subunits. The sequence is that of Small ribosomal subunit protein uS12cz/uS12cy (rps12-A) from Agrostis stolonifera (Creeping bentgrass).